The primary structure comprises 443 residues: Protein Z-dependent protease inhibitor (443 aa).

Positions 1–23 (MKVVPSLLLSVLLAQVWLVPGLA) are cleaved as a signal peptide. Residues 24-66 (PSPQSPETPAPQNQTSRVVQAPREEEEDEQEASEEKAGDEEKA) form a disordered region. N36 carries an N-linked (GlcNAc...) asparagine glycan. S56 carries the phosphoserine modification. Over residues 56 to 66 (SEEKAGDEEKA) the composition is skewed to basic and acidic residues. The segment at 136 to 153 (TKPGLLPSLFKGLRETLS) is heparin-binding. N-linked (GlcNAc...) asparagine glycosylation is found at N180 and N295.

Belongs to the serpin family. Post-translationally, phosphorylated by FAM20C in the extracellular medium.

It localises to the secreted. Its function is as follows. Inhibits activity of the coagulation protease factor Xa in the presence of PROZ, calcium and phospholipids. Also inhibits factor XIa in the absence of cofactors. In Pongo abelii (Sumatran orangutan), this protein is Protein Z-dependent protease inhibitor (SERPINA10).